The chain runs to 358 residues: Na(+)/H(+) exchange regulatory cofactor NHE-RF1 (358 aa).

An N-acetylserine modification is found at S2. A phosphoserine mark is found at S2 and S46. The PDZ 1 domain occupies L14–D94. A compositionally biased stretch (low complexity) spans Q114–E134. The segment at Q114–R151 is disordered. The span at N135–R151 shows a compositional bias: basic and acidic residues. One can recognise a PDZ 2 domain in the interval L154–E234. The segment at S247–L358 is disordered. Low complexity predominate over residues L272–S290. Phosphoserine is present on residues S279, S289, and S290. T292 bears the Phosphothreonine mark. 3 positions are modified to phosphoserine: S293, S298, and S301. Low complexity predominate over residues T308 to L327. A compositionally biased stretch (basic and acidic residues) spans W348 to L358.

Homodimer, and heterodimer with NHERF2. Binds the N-termini of EZR, RDX and MSN. Binds the C-termini of PDGFRA, PDGFRB, ADRB2, NOS2 and CFTR. Binds ARHGAP17, EPI64, RACK1, OPRK1, GNAQ, CTNNB1 and PLCB3. Binds PDZK1. Interacts with CLCN3. Binds the C-terminus of PAG1. In resting T-cells, part of a PAG1-NHERF1-MSN complex which is disrupted upon TCR activation. Forms a complex with CFTR and SLC4A7. Forms a complex with SLC4A7 and ATP6V1B1. Interacts with TRPC4 (via the PDZ-binding domain). Directly interacts with HTR4. Interacts (via the PDZ 1 domain) with PODXL (via the C-terminal PDZ-binding motif DTHL); interaction is not detected in glomerular epithelium cells. Interacts (via the PDZ 1 domain) with PODXL (via the C-terminal PDZ-binding motif DTHL); the interaction take place early in the secretory pathway and is necessary for its apical membrane sorting. Interacts with SLC26A3. Interacts with MCC. Interacts with SLC34A1. Interacts (via the PDZ domains) with SLC26A6 isoform 4 and isoform 5. Interacts (via PDZ domains) with ACE2 (via PDZ-binding motif); the interaction may enhance ACE2 membrane residence. Post-translationally, phosphorylated on serine residues. As to expression, detected in ileum, duodenum and in kidney, where it is found in the glomerulus, the proximal tubule, the thick ascending limb of Henle's loop and the cortical collecting duct.

Its subcellular location is the cytoplasm. It is found in the apical cell membrane. The protein resides in the cell projection. It localises to the filopodium. The protein localises to the ruffle. Its subcellular location is the microvillus. It is found in the endomembrane system. Functionally, scaffold protein that connects plasma membrane proteins with members of the ezrin/moesin/radixin family and thereby helps to link them to the actin cytoskeleton and to regulate their surface expression. Necessary for recycling of internalized ADRB2. Was first known to play a role in the regulation of the activity and subcellular location of SLC9A3. Necessary for cAMP-mediated phosphorylation and inhibition of SLC9A3. Involved in sperm capacitation. May participate in the regulation of the chloride and bicarbonate homeostasis in spermatozoa. May enhance Wnt signaling. May participate in HTR4 targeting to microvilli. Involved in the regulation of phosphate reabsorption in the renal proximal tubules. In Oryctolagus cuniculus (Rabbit), this protein is Na(+)/H(+) exchange regulatory cofactor NHE-RF1 (NHERF1).